A 294-amino-acid chain; its full sequence is MKPFLRWCFVATALTLAGCSNTSWRKSEVLAVPLQPTLQQEVILARMEQILASRALTDDERAQLLYERGVLYDSLGLRALARNDFSQALAIRPDMPEVFNYLGIYLTQAGNFDAAYEAFDSVLELDPTYNYAHLNRGIALYYGGRDKLAQDDLLAFYQDDPNDPFRSLWLYLAEQKLDEKQAKEVLRQHFEKSDKEQWGWNIVEFYLGNISEQTLMERLKADATDNTSLAEHLSETNFYLGKYYLSLGDLDSATALFKLAVANNVHNFVEHRYALLELSLLGQDQDDLAESDQQ.

Positions 1 to 18 (MKPFLRWCFVATALTLAG) are cleaved as a signal peptide. Cysteine 19 is lipidated: N-palmitoyl cysteine. Cysteine 19 carries the S-diacylglycerol cysteine lipid modification. 3 TPR repeats span residues 62 to 95 (AQLL…RPDM), 96 to 129 (PEVF…DPTY), and 234 to 267 (SETN…NVHN).

Homodimer.

The protein localises to the cell membrane. In terms of biological role, may be involved in cell division. May play a role in bacterial septation or regulation of cell wall degradation during cell division. In Escherichia coli O17:K52:H18 (strain UMN026 / ExPEC), this protein is Lipoprotein NlpI (nlpI).